A 160-amino-acid chain; its full sequence is Crossover junction endodeoxyribonuclease RuvC (160 aa).

Catalysis depends on residues aspartate 7, glutamate 70, and aspartate 142. Mg(2+)-binding residues include aspartate 7, glutamate 70, and aspartate 142.

The protein belongs to the RuvC family. Homodimer which binds Holliday junction (HJ) DNA. The HJ becomes 2-fold symmetrical on binding to RuvC with unstacked arms; it has a different conformation from HJ DNA in complex with RuvA. In the full resolvosome a probable DNA-RuvA(4)-RuvB(12)-RuvC(2) complex forms which resolves the HJ. Mg(2+) serves as cofactor.

The protein localises to the cytoplasm. The catalysed reaction is Endonucleolytic cleavage at a junction such as a reciprocal single-stranded crossover between two homologous DNA duplexes (Holliday junction).. In terms of biological role, the RuvA-RuvB-RuvC complex processes Holliday junction (HJ) DNA during genetic recombination and DNA repair. Endonuclease that resolves HJ intermediates. Cleaves cruciform DNA by making single-stranded nicks across the HJ at symmetrical positions within the homologous arms, yielding a 5'-phosphate and a 3'-hydroxyl group; requires a central core of homology in the junction. The consensus cleavage sequence is 5'-(A/T)TT(C/G)-3'. Cleavage occurs on the 3'-side of the TT dinucleotide at the point of strand exchange. HJ branch migration catalyzed by RuvA-RuvB allows RuvC to scan DNA until it finds its consensus sequence, where it cleaves and resolves the cruciform DNA. The chain is Crossover junction endodeoxyribonuclease RuvC from Ehrlichia ruminantium (strain Welgevonden).